A 108-amino-acid chain; its full sequence is MAGMKIKKGDTVQIVTGKDRGLKGKVIRAIPDQNKVVVEGANRVTRHTRVQQSSRGSQSGGIVTQEAPIHVSNVMIVDPSDGRPTRVGYRFNDDGTKVRISRRTGAEL.

The segment at 46–65 is disordered; sequence RHTRVQQSSRGSQSGGIVTQ. Residues 51-61 are compositionally biased toward low complexity; that stretch reads QQSSRGSQSGG.

Belongs to the universal ribosomal protein uL24 family. Part of the 50S ribosomal subunit.

One of two assembly initiator proteins, it binds directly to the 5'-end of the 23S rRNA, where it nucleates assembly of the 50S subunit. In terms of biological role, one of the proteins that surrounds the polypeptide exit tunnel on the outside of the subunit. The chain is Large ribosomal subunit protein uL24 from Parafrankia sp. (strain EAN1pec).